Consider the following 273-residue polypeptide: 2,3,4,5-tetrahydropyridine-2,6-dicarboxylate N-succinyltransferase (273 aa).

The substrate site is built by Arg-105 and Asp-142.

The protein belongs to the transferase hexapeptide repeat family. As to quaternary structure, homotrimer.

The protein resides in the cytoplasm. The catalysed reaction is (S)-2,3,4,5-tetrahydrodipicolinate + succinyl-CoA + H2O = (S)-2-succinylamino-6-oxoheptanedioate + CoA. It functions in the pathway amino-acid biosynthesis; L-lysine biosynthesis via DAP pathway; LL-2,6-diaminopimelate from (S)-tetrahydrodipicolinate (succinylase route): step 1/3. The protein is 2,3,4,5-tetrahydropyridine-2,6-dicarboxylate N-succinyltransferase of Bordetella avium (strain 197N).